The following is a 442-amino-acid chain: Choline monooxygenase, chloroplastic (442 aa).

The transit peptide at 1–58 (MASSASMLINYPTTFCGVRNSSNPNNDQFSDQINIPSSLNNNINISKITSKTNKIIPK) directs the protein to the chloroplast. Residues 123–229 (WQVAGYSDQI…VAIWGPFVLI (107 aa)) enclose the Rieske domain. [2Fe-2S] cluster is bound by residues Cys-165, His-167, Cys-184, and His-187. Positions 290 and 295 each coordinate Fe cation.

Belongs to the choline monooxygenase family. The cofactor is [2Fe-2S] cluster. Fe cation is required as a cofactor. Requires Mg(2+) as cofactor.

The protein localises to the plastid. It localises to the chloroplast stroma. The catalysed reaction is choline + 2 reduced [2Fe-2S]-[ferredoxin] + O2 + 2 H(+) = betaine aldehyde hydrate + 2 oxidized [2Fe-2S]-[ferredoxin] + H2O. The protein operates within amine and polyamine biosynthesis; betaine biosynthesis via choline pathway; betaine aldehyde from choline (monooxygenase route): step 1/1. Catalyzes the first step of the osmoprotectant glycine betaine synthesis. In Amaranthus tricolor (Joseph's coat), this protein is Choline monooxygenase, chloroplastic (CMO).